Here is a 109-residue protein sequence, read N- to C-terminus: uncharacterized protein (109 aa).

One can recognise an HTH cro/C1-type domain in the interval 42 to 100; sequence LEEKLKQEKIDRKYLAEVTNIPYTTVSRIMRAEANREFNPEIDTILKIAKYFNCTMDEV. Residues 53–72 constitute a DNA-binding region (H-T-H motif); sequence RKYLAEVTNIPYTTVSRIMR.

This is an uncharacterized protein from Rickettsia conorii (strain ATCC VR-613 / Malish 7).